The chain runs to 367 residues: 2-aminoethylphosphonate--pyruvate transaminase (367 aa).

At Lys194 the chain carries N6-(pyridoxal phosphate)lysine.

The protein belongs to the class-V pyridoxal-phosphate-dependent aminotransferase family. PhnW subfamily. In terms of assembly, homodimer. Pyridoxal 5'-phosphate serves as cofactor.

It carries out the reaction (2-aminoethyl)phosphonate + pyruvate = phosphonoacetaldehyde + L-alanine. Functionally, involved in phosphonate degradation. The polypeptide is 2-aminoethylphosphonate--pyruvate transaminase (Klebsiella pneumoniae subsp. pneumoniae (strain ATCC 700721 / MGH 78578)).